Reading from the N-terminus, the 286-residue chain is MNVVKNIADLRAAVARARGEGKRIGFVPTMGNLHAGHIALVKKAGQRADFVVASIFVNPLQFGPNEDLDNYPRTLAADQEKLFDAGCHLLFAPSVEEMYPHGQANQTIVRVPGVSEGLCGGSRPGHFDGVSTVVSKLFNMVLPDLAVFGQKDFQQLAVIRTMVRDLNMPVQILSEPTVRADDGLALSSRNGYLSADERATAPVLYRTLNQLRDALQGGRRDLPALIDEGLEALRNAGLRPDYLDIRNAIDLQPVTDASSELVILAAAYLGKTRLIDNLLVDLRTSA.

ATP is bound at residue 30–37 (MGNLHAGH). Catalysis depends on His-37, which acts as the Proton donor. Gln-61 is a binding site for (R)-pantoate. A beta-alanine-binding site is contributed by Gln-61. ATP is bound at residue 149 to 152 (GQKD). (R)-pantoate is bound at residue Gln-155. Residues Val-178 and 186–189 (LSSR) each bind ATP.

This sequence belongs to the pantothenate synthetase family. As to quaternary structure, homodimer.

The protein resides in the cytoplasm. The catalysed reaction is (R)-pantoate + beta-alanine + ATP = (R)-pantothenate + AMP + diphosphate + H(+). The protein operates within cofactor biosynthesis; (R)-pantothenate biosynthesis; (R)-pantothenate from (R)-pantoate and beta-alanine: step 1/1. Functionally, catalyzes the condensation of pantoate with beta-alanine in an ATP-dependent reaction via a pantoyl-adenylate intermediate. This chain is Pantothenate synthetase, found in Stutzerimonas stutzeri (strain A1501) (Pseudomonas stutzeri).